Reading from the N-terminus, the 262-residue chain is Acyl-[acyl-carrier-protein]--UDP-N-acetylglucosamine O-acyltransferase (262 aa).

This sequence belongs to the transferase hexapeptide repeat family. LpxA subfamily. In terms of assembly, homotrimer.

The protein resides in the cytoplasm. The enzyme catalyses a (3R)-hydroxyacyl-[ACP] + UDP-N-acetyl-alpha-D-glucosamine = a UDP-3-O-[(3R)-3-hydroxyacyl]-N-acetyl-alpha-D-glucosamine + holo-[ACP]. The protein operates within glycolipid biosynthesis; lipid IV(A) biosynthesis; lipid IV(A) from (3R)-3-hydroxytetradecanoyl-[acyl-carrier-protein] and UDP-N-acetyl-alpha-D-glucosamine: step 1/6. Its function is as follows. Involved in the biosynthesis of lipid A, a phosphorylated glycolipid that anchors the lipopolysaccharide to the outer membrane of the cell. The chain is Acyl-[acyl-carrier-protein]--UDP-N-acetylglucosamine O-acyltransferase from Pasteurella multocida (strain Pm70).